The following is a 176-amino-acid chain: Nascent polypeptide-associated complex subunit alpha (176 aa).

Positions 14-78 (SKNEKKAREL…AKVDDFTQRL (65 aa)) constitute an NAC-A/B domain. Residues 85–127 (LQQNEGVLPAGQDAVSKDPQSIQADMQAAADSATDKPSADDAV) form a disordered region. The UBA domain maps to 137–176 (LNADDIELVMQQAGVPRAKAAKALKEHDSDIVNAIMALSG).

The protein belongs to the NAC-alpha family. Part of the nascent polypeptide-associated complex (NAC), consisting of EGD2 and EGD1. NAC associates with ribosomes via EGD1.

Its subcellular location is the cytoplasm. It is found in the nucleus. In terms of biological role, component of the nascent polypeptide-associated complex (NAC), a dynamic component of the ribosomal exit tunnel, protecting the emerging polypeptides from interaction with other cytoplasmic proteins to ensure appropriate nascent protein targeting. The NAC complex also promotes mitochondrial protein import by enhancing productive ribosome interactions with the outer mitochondrial membrane and blocks the inappropriate interaction of ribosomes translating non-secretory nascent polypeptides with translocation sites in the membrane of the endoplasmic reticulum. EGD2 may also be involved in transcription regulation. This is Nascent polypeptide-associated complex subunit alpha (EGD2) from Kluyveromyces lactis (strain ATCC 8585 / CBS 2359 / DSM 70799 / NBRC 1267 / NRRL Y-1140 / WM37) (Yeast).